Here is a 636-residue protein sequence, read N- to C-terminus: Outer spore wall assembly protein SHE10 (636 aa).

Residues Met1 to Tyr23 form the signal peptide. Coiled coils occupy residues Arg433–Glu460 and Lys551–Glu584. Residues Gln565 to Ser607 form a disordered region. A compositionally biased stretch (low complexity) spans Ala579–Ser607.

The protein belongs to the SHE10 family. In terms of assembly, component of the mitochondria-localized RNase mitochondrial RNA-processing (RNase MRP) composed of one single RNA encoded by the NME1 gene and at least 31 proteins. Absent in the nucleus-localized RNase MRP (NuMRP).

It localises to the mitochondrion. Its function is as follows. Involved in spore wall assembly. May be a component of the mitochondrial RNase MRP (MtMRP), a ribonucleoprotein endoribonuclease involved in the cleaving RNA transcripts to generate primers for DNA replication in mitochondria. This chain is Outer spore wall assembly protein SHE10, found in Kluyveromyces lactis (strain ATCC 8585 / CBS 2359 / DSM 70799 / NBRC 1267 / NRRL Y-1140 / WM37) (Yeast).